The sequence spans 245 residues: Probable phosphatase YcdX (245 aa).

9 residues coordinate Zn(2+): His-7, His-9, His-15, His-40, Glu-73, His-101, His-131, Asp-192, and His-194.

It belongs to the PHP family. In terms of assembly, homotrimer. Zn(2+) serves as cofactor.

The protein is Probable phosphatase YcdX of Escherichia coli (strain K12 / MC4100 / BW2952).